The chain runs to 61 residues: Probable tautomerase spyM18_1099 (61 aa).

Pro2 acts as the Proton acceptor; via imino nitrogen in catalysis.

This sequence belongs to the 4-oxalocrotonate tautomerase family.

The sequence is that of Probable tautomerase spyM18_1099 from Streptococcus pyogenes serotype M18 (strain MGAS8232).